Reading from the N-terminus, the 712-residue chain is Methylmalonyl-CoA mutase (712 aa).

Substrate contacts are provided by residues 73 to 77 (TVRQY), 183 to 185 (TIQ), Arg195, Lys222, His232, and 271 to 273 (RLS). Positions 580 to 712 (KPKIMVAKLG…DLIEGKRRNV (133 aa)) constitute a B12-binding domain. His593 is a binding site for adenosylcob(III)alamin.

This sequence belongs to the methylmalonyl-CoA mutase family. As to quaternary structure, homodimer. It depends on adenosylcob(III)alamin as a cofactor. A monovalent cation is required as a cofactor.

The enzyme catalyses (R)-methylmalonyl-CoA = succinyl-CoA. Its pathway is metabolic intermediate metabolism; propanoyl-CoA degradation; succinyl-CoA from propanoyl-CoA: step 3/3. Radical enzyme that catalyzes the transformation of methylmalonyl-CoA to succinyl-CoA. Is required for growth on the polyhydroxyalkanoate degradation pathway intermediates 3-hydroxybutyrate and acetoacetate as sole carbon source. The polypeptide is Methylmalonyl-CoA mutase (Rhizobium meliloti (strain 1021) (Ensifer meliloti)).